We begin with the raw amino-acid sequence, 221 residues long: Chalcone--flavanone isomerase (221 aa).

3 residues coordinate substrate: threonine 52, asparagine 117, and serine 193.

The protein belongs to the chalcone isomerase family. Flowers.

It carries out the reaction a chalcone = a flavanone.. Its pathway is secondary metabolite biosynthesis; flavonoid biosynthesis. Its function is as follows. Catalyzes the intramolecular cyclization of bicyclic chalcones into tricyclic (S)-flavanones. Responsible for the isomerization of 4,2',4',6'-tetrahydroxychalcone (also termed chalcone) into naringenin. The chain is Chalcone--flavanone isomerase (CHI) from Gentiana triflora (Clustered gentian).